A 336-amino-acid chain; its full sequence is MEEMSPDNIHGVILAVSSSIFIGSSFIIKKKGLKKAGVSGARAGEGGYGYLYEPWWWAGMITMIVGEIANFAAYAFAPAILVTPLGALSIIFSAVLAHFILEEKLHMFGILGCVLCVVGSTTIVLHAPHEQGIESVKQVWHLATEPGFLAYSAVVLVVVLALIFYYEPRYGKTHMIVYVGICSLMGSLTVMSVKAVAIAIKLTFSGMNQFKYFHAWIFIIVVTICCILQINYLNKALDNFNTAVISPVYYVMFTTFTILASMIMFKDWASQSGLQIATELCGFVTILSGTFLLHKTKDMGNSTSLRGSTSHSPRDTPVFINSGSSRSSNSTRPAIL.

The Extracellular portion of the chain corresponds to 1-7 (MEEMSPD). The chain crosses the membrane as a helical span at residues 8–28 (NIHGVILAVSSSIFIGSSFII). Residues 29–55 (KKKGLKKAGVSGARAGEGGYGYLYEPW) lie on the Cytoplasmic side of the membrane. A helical transmembrane segment spans residues 56 to 76 (WWAGMITMIVGEIANFAAYAF). At 77–79 (APA) the chain is on the extracellular side. A helical membrane pass occupies residues 80–100 (ILVTPLGALSIIFSAVLAHFI). Residues 101-104 (LEEK) lie on the Cytoplasmic side of the membrane. Residues 105–125 (LHMFGILGCVLCVVGSTTIVL) traverse the membrane as a helical segment. Topologically, residues 126 to 145 (HAPHEQGIESVKQVWHLATE) are extracellular. The chain crosses the membrane as a helical span at residues 146–166 (PGFLAYSAVVLVVVLALIFYY). Over 167–179 (EPRYGKTHMIVYV) the chain is Cytoplasmic. A helical transmembrane segment spans residues 180–200 (GICSLMGSLTVMSVKAVAIAI). The Extracellular portion of the chain corresponds to 201 to 212 (KLTFSGMNQFKY). A helical membrane pass occupies residues 213–233 (FHAWIFIIVVTICCILQINYL). Topologically, residues 234–244 (NKALDNFNTAV) are cytoplasmic. Residues 245–265 (ISPVYYVMFTTFTILASMIMF) traverse the membrane as a helical segment. The Extracellular portion of the chain corresponds to 266–272 (KDWASQS). Residues 273-293 (GLQIATELCGFVTILSGTFLL) form a helical membrane-spanning segment. At 294-336 (HKTKDMGNSTSLRGSTSHSPRDTPVFINSGSSRSSNSTRPAIL) the chain is on the cytoplasmic side. Positions 303–336 (TSLRGSTSHSPRDTPVFINSGSSRSSNSTRPAIL) are disordered. Low complexity predominate over residues 321-330 (NSGSSRSSNS).

The protein belongs to the NIPA (TC 2.A.7) family. As to quaternary structure, homodimer.

The protein localises to the cell membrane. It localises to the early endosome. Functionally, acts as a Mg(2+) transporter. Can also transport other divalent cations such as Fe(2+), Sr(2+), Ba(2+), Mn(2+) and Co(2+) but to a much less extent than Mg(2+). This chain is Probable magnesium transporter NIPA2, found in Arabidopsis thaliana (Mouse-ear cress).